We begin with the raw amino-acid sequence, 1024 residues long: NLR family CARD domain-containing protein 4 (1024 aa).

One can recognise a CARD domain in the interval 1–88 (MNFIKDNSRA…PLFQDLNGQS (88 aa)). Residues 95 to 298 (EGDLDDLAQD…QFGALTAEVG (204 aa)) are nucleotide-binding domain (NBD). In terms of domain architecture, NACHT spans 163–476 (SPCIIEGESG…VTKGNGYLQK (314 aa)). 169-176 (GESGKGKS) contacts ATP. The winged-helix domain (WHD) stretch occupies residues 356-463 (SHTQTTLFHT…RLSSLLTSHE (108 aa)). Phosphoserine is present on serine 533. 12 LRR repeats span residues 578–598 (FFQG…LFDF), 656–679 (KQEF…DIRY), 735–758 (VTNL…LTDS), 762–785 (LKNL…KLAE), 787–812 (LKNL…DYIV), 824–847 (EIQL…LHNL), 848–870 (VKLS…ALHE), 878–902 (LEQL…LLKH), 911–933 (KLGL…FFGK), 936–963 (LKNF…VFEN), 965–985 (KQLV…ALVR), and 999–1021 (EARL…AFKL).

Homooligomer; homooligomerizes to induce formation of the NLRC4 inflammasome. Homooligomerizes following activation by pathogenic proteins. Component of the NLRC4 inflammasome, at least composed of NLRC4 and caspase-1 (CASP1). Some NLRC4 inflammasomes contain PYCARD/ASC, while some others directly contact and activate CASP1. Interacts (via CARD domain) with PYCARD/ASC, pro-caspase-1 (CASP1), NOD2, BCL10 and NALP1 (NAC) by CARD-CARD interaction. Interacts with EIF2AK2/PKR. In terms of processing, phosphorylated at Ser-533 following infection of macrophages with S.typhimurium (Salmonella). Phosphorylation is essential for NLRC4 inflammasome function to promote caspase-1 activation and pyroptosis. PRKCD phosphorylates Ser-533 in vitro. Isoform 2 is expressed ubiquitously, although highly expressed in lung and spleen. Isoform 1 is highly expressed in lung, followed by leukocytes especially monocytes, lymph node, colon, brain, prostate, placenta, spleen, bone marrow and fetal liver. Isoform 4 is only detected in brain.

The protein localises to the cytoplasm. It localises to the cytosol. Its subcellular location is the inflammasome. Functionally, key component of inflammasomes that indirectly senses specific proteins from pathogenic bacteria and fungi and responds by assembling an inflammasome complex that promotes caspase-1 activation, cytokine production and macrophage pyroptosis. The NLRC4 inflammasome is activated as part of the innate immune response to a range of intracellular bacteria. The chain is NLR family CARD domain-containing protein 4 (NLRC4) from Homo sapiens (Human).